We begin with the raw amino-acid sequence, 699 residues long: eEF1A lysine and N-terminal methyltransferase (699 aa).

Methionine 1 bears the N-acetylmethionine mark. Phosphoserine is present on serine 267. Positions 433–460 are disordered; that stretch reads VSHRAQKKRKKDRKKHRPADTPEDLPAA. Residues 436-449 are compositionally biased toward basic residues; that stretch reads RAQKKRKKDRKKHR.

It belongs to the methyltransferase superfamily. In terms of assembly, forms a tripartite complex containing GAB1, METTL13 and SPRY2. Within the complex interacts with GAB1 and SPRY2.

It is found in the cytoplasm. The protein resides in the nucleus. The protein localises to the mitochondrion. The enzyme catalyses L-lysyl-[protein] + S-adenosyl-L-methionine = N(6)-methyl-L-lysyl-[protein] + S-adenosyl-L-homocysteine + H(+). The catalysed reaction is N(6)-methyl-L-lysyl-[protein] + S-adenosyl-L-methionine = N(6),N(6)-dimethyl-L-lysyl-[protein] + S-adenosyl-L-homocysteine + H(+). It catalyses the reaction N-terminal glycyl-L-lysyl-L-glutamyl-[protein] + 3 S-adenosyl-L-methionine = N-terminal N,N,N-trimethyl-glycyl-L-lysyl-L-glutamyl-[protein] + 3 S-adenosyl-L-homocysteine + 3 H(+). Its function is as follows. Dual methyltransferase that catalyzes methylation of elongation factor 1-alpha (EEF1A1 and EEF1A2) at two different positions, and is therefore involved in the regulation of mRNA translation. Via its C-terminus, methylates EEF1A1 and EEF1A2 at the N-terminal residue 'Gly-2'. Via its N-terminus dimethylates EEF1A1 and EEF1A2 at residue 'Lys-55'. Has no activity towards core histones H2A, H2B, H3 and H4. In Bos taurus (Bovine), this protein is eEF1A lysine and N-terminal methyltransferase (METTL13).